A 238-amino-acid chain; its full sequence is Protein A47 (238 aa).

The protein belongs to the orthopoxvirus A47 protein family.

This Vaccinia virus (strain Ankara) (VACV) protein is Protein A47.